Here is a 761-residue protein sequence, read N- to C-terminus: Translational repressor ifet-1 (761 aa).

Disordered regions lie at residues 101–274 (SPQR…SSGG), 386–446 (KGME…QHLH), 557–592 (VQRQLQKSSSNADQKKEKTSQSPPESNQETSDAHNQ), 681–702 (QQAQMANMQERQGPSHNQQQHQ), and 730–761 (GSQFTGSGDRIPSSVRPMSLEDLEKQLTAVPK). 3 stretches are compositionally biased toward basic and acidic residues: residues 114–128 (PTDDKGRDGEYERLG), 164–189 (RGTRGAEWKKDTTRGAKFAPRREERL), and 212–222 (IELRGFDEPKK). Composition is skewed to polar residues over residues 400-410 (QDPSQQAQLLQ), 557-568 (VQRQLQKSSSNA), 576-592 (SQSPPESNQETSDAHNQ), and 690-702 (ERQGPSHNQQQHQ).

Interacts with cgh-1. Interacts with ife-1 and oma-1. In the embryo, significantly enriched in the germ cell lineage.

It localises to the cytoplasm. Functionally, involved in translational repression of multiple mRNAs in the distal gonad. Recruited to the 3' untranslated region (UTR) of zif-1 by oma-1 and is required for translational repression of zif-1. May also be involved in translational repression of mei-1 through recruitment to the mei-1 3' UTR by oma-1. Required for oogenesis but not spermatogenesis, for P granule formation and for the localization of car-1 and cgh-1 to P granules. Required for normal spindle orientation in early embryos. The chain is Translational repressor ifet-1 from Caenorhabditis elegans.